Here is a 207-residue protein sequence, read N- to C-terminus: Large ribosomal subunit protein uL4 (207 aa).

Belongs to the universal ribosomal protein uL4 family. In terms of assembly, part of the 50S ribosomal subunit.

One of the primary rRNA binding proteins, this protein initially binds near the 5'-end of the 23S rRNA. It is important during the early stages of 50S assembly. It makes multiple contacts with different domains of the 23S rRNA in the assembled 50S subunit and ribosome. In terms of biological role, forms part of the polypeptide exit tunnel. This Rickettsia conorii (strain ATCC VR-613 / Malish 7) protein is Large ribosomal subunit protein uL4.